The chain runs to 1217 residues: MMSLSVRPQRRLLSARVSRSQSFAGVLGSQERGPRNFTVFSPPGPQRKPLVLSRVSRMFSVAHPAPKVPQPERLDLVYAALKRGLTAYLEVHQQEQEKLQRQIKESKRNSRLGFLYDLDKQVKSIERFLRRLEFHASKIDELYEAYCVQRRLRDGAYNMVRAYSTGSPGSREARDSLAEATRGHREYTESMCLLENELEAQLGEFHLRMKGLAGFARLCVGDQYEICMKYGRQRWKLRGRIESSGKQVWDSEETVFLPLLTEFLSIKVTELKGLANHVVVGSVSCETKDLFAALPQVVAVDINDLGTIKLSLEVIWSPFDKDDQPSAASTVNKASTVTKRFSTYSQSPPDTPSLREQAFYNMLRRQEELENGTAWSLSSESSDDSSSPQLSGTARYSSTPKPLVQQPEPLPVQVTFRRPESLSSGSMDEEPPLTPALVNGHAPYSRTLSHISEASVDAALTEAMEAVDLKCPAPGPSPLVYPESTHVEHVSSVPPVADNGRSATSPALSTAGPAPTFIDPASSTQLDLVHKATDSGSSELPSITHTMASSTYSAVSPINSVPGLTSTTVGSTHKPMPSPLTSTGSIPSVTDSIQTTTSPTHTTPSPTHTTVSPTHSTPSPTHTTVSPSNAALSPSNATPSLSHSTTSPTQKATMSTHTTSAVGPVQTTTSPISTTVSPSPSVDTAIISSSSAVPSVPGPEARPCSHPTSTPYTKADPTAACTSSPSLASSGPKPLTSPAPDSLEQILKSPSSSPSSIVPEPQRSELSLALVAQAPVPEATGGAGDRRLEEALRTLMAALDDYRGQFPELQGLEQEVTRLESLLMQRQGLTRSRASSLSITVEHALESFSFLNDDEDEDNDSPGDRPTSSPEVVAEERLDSSNAQCLSTGCSALDATLVQHLYHCSCLLLKLGTFGPLRCQEAWALERLLREARVLQEVCEHSKLWGNAVTSAQEVVQFSASRPGFLTFWDQCTEGLNPFLCPVEQVLLTFCSQYGARLSLRQPGLAEAVCVKFLEDALGQKLPRRPHSGPGEQLTIFQFWSYVEVLDSPSMEAYVTETAEEVLLVQNLNSDDQAVVLKALRLAPEGRLRKDGLRALSSLLVHGNSKVMAAVSTQLRSLSLGPVFRERALLCFLDQLEDEDVQTRVAGCLALGCIKAPEGIEPLVYLCQTDTEAVREAARQSLQQCGEEGQSAHRQLEESLDALPCLFGPSSMASTAF.

A Phosphoserine modification is found at Ser-22. A coiled-coil region spans residues 83–112 (RGLTAYLEVHQQEQEKLQRQIKESKRNSRL). A phosphoserine mark is found at Ser-345 and Ser-347. At Thr-351 the chain carries Phosphothreonine. The tract at residues 371 to 413 (NGTAWSLSSESSDDSSSPQLSGTARYSSTPKPLVQQPEPLPVQ) is disordered. 2 stretches are compositionally biased toward low complexity: residues 376 to 391 (SLSSESSDDSSSPQLS) and 400 to 413 (PKPLVQQPEPLPVQ). 2 positions are modified to phosphoserine: Ser-452 and Ser-455. Residues 565–762 (TSTTVGSTHK…SPSSIVPEPQ (198 aa)) form a disordered region. A compositionally biased stretch (polar residues) spans 579–594 (PLTSTGSIPSVTDSIQ). Low complexity predominate over residues 595–649 (TTTSPTHTTPSPTHTTVSPTHSTPSPTHTTVSPSNAALSPSNATPSLSHSTTSPT). Polar residues predominate over residues 650–661 (QKATMSTHTTSA). Low complexity predominate over residues 664-695 (PVQTTTSPISTTVSPSPSVDTAIISSSSAVPS). The span at 720 to 729 (ACTSSPSLAS) shows a compositional bias: polar residues. A Phosphoserine modification is found at Ser-742. The stretch at 786 to 828 (RRLEEALRTLMAALDDYRGQFPELQGLEQEVTRLESLLMQRQG) forms a coiled coil. Positions 850–874 (FLNDDEDEDNDSPGDRPTSSPEVVA) are disordered. Positions 852–861 (NDDEDEDNDS) are enriched in acidic residues. Phosphoserine is present on residues Ser-868 and Ser-869.

It belongs to the RIPOR family. Interacts (via N-terminus) with RHOA (GTP-bound form); this interaction links active RHOA to STK24 and STK26 kinases. Interacts with RHOB. Interacts with RHOC. Interacts (via C-terminus) with PDCD10; this interaction occurs in a Rho-independent manner. Interacts (via C-terminus) with STK24; this interaction occurs in a PDCD10-dependent and Rho-independent manner. Interacts (via C-terminus) with STK26; this interaction occurs in a PDCD10-dependent and Rho-independent manner. Interacts (via N-terminus) with 14-3-3 proteins; these interactions occur in a Rho-dependent manner.

The protein resides in the cytoplasm. It is found in the golgi apparatus. In terms of biological role, downstream effector protein for Rho-type small GTPases that plays a role in cell polarity and directional migration. Acts as an adapter protein, linking active Rho proteins to STK24 and STK26 kinases, and hence positively regulates Golgi reorientation in polarized cell migration upon Rho activation. Involved in the subcellular relocation of STK26 from the Golgi to cytoplasm punctae in a Rho- and PDCD10-dependent manner upon serum stimulation. This is Rho family-interacting cell polarization regulator 1 from Rattus norvegicus (Rat).